Reading from the N-terminus, the 164-residue chain is Peptidyl-prolyl cis-trans isomerase A (164 aa).

Residue Met-1 is modified to N-acetylmethionine. Val-2 is modified (N-acetylvaline; in Peptidyl-prolyl cis-trans isomerase A, N-terminally processed). The region spanning 7 to 163 is the PPIase cyclophilin-type domain; it reads FFDITADGEP…KKITISDCGQ (157 aa). N6-acetyllysine; alternate is present on Lys-28. Residue Lys-28 forms a Glycyl lysine isopeptide (Lys-Gly) (interchain with G-Cter in SUMO2); alternate linkage. Lys-28 participates in a covalent cross-link: Glycyl lysine isopeptide (Lys-Gly) (interchain with G-Cter in ubiquitin); alternate. Residues Lys-44 and Lys-76 each carry the N6-acetyllysine modification. Phosphoserine is present on Ser-77. Lys-82 is subject to N6-acetyllysine; alternate. Residue Lys-82 forms a Glycyl lysine isopeptide (Lys-Gly) (interchain with G-Cter in SUMO2); alternate linkage. A Phosphothreonine modification is found at Thr-93. N-linked (GlcNAc...) asparagine glycosylation occurs at Asn-108. N6-acetyllysine occurs at positions 125, 131, and 133.

It belongs to the cyclophilin-type PPIase family. PPIase A subfamily. In terms of assembly, interacts with protein phosphatase PPP3CA/calcineurin A. Interacts with isoform 2 of BSG/CD147. Interacts with FOXO1; the interaction promotes FOXO1 dephosphorylation, nuclear accumulation and transcriptional activity. Interacts with integrin ITGA2B:ITGB3; the interaction is ROS and peptidyl-prolyl cis-trans isomerase (PPIase) activity-dependent and is increased in the presence of thrombin. Interacts with MAP3K5. Interacts with TARDBP; the interaction is dependent on the RNA-binding activity of TARDBP and the PPIase activity of PPIA/CYPA and the acetylation of PPIA/CYPA at Lys-125 favors the interaction. Interacts with HNRNPA1, HNRNPA2B1, HNRNPC, RBMX, HNRNPK and HNRNPM. Post-translationally, acetylation at Lys-125 markedly inhibits catalysis of cis to trans isomerization. PPIA acetylation also antagonizes the immunosuppressive effects of cyclosporine by inhibiting the sequential steps of cyclosporine binding and calcineurin inhibition. Acetylation at Lys-125 favors the interaction with TARDBP.

It is found in the cytoplasm. It localises to the secreted. The protein localises to the nucleus. The enzyme catalyses [protein]-peptidylproline (omega=180) = [protein]-peptidylproline (omega=0). With respect to regulation, binds cyclosporin A (CsA). CsA mediates some of its effects via an inhibitory action on PPIase. Functionally, catalyzes the cis-trans isomerization of proline imidic peptide bonds in oligopeptides. Exerts a strong chemotactic effect on leukocytes partly through activation of one of its membrane receptors BSG/CD147, initiating a signaling cascade that culminates in MAPK/ERK activation. Activates endothelial cells (ECs) in a proinflammatory manner by stimulating activation of NF-kappa-B and ERK, JNK and p38 MAP-kinases and by inducing expression of adhesion molecules including SELE and VCAM1. Induces apoptosis in ECs by promoting the FOXO1-dependent expression of CCL2 and BCL2L11 which are involved in EC chemotaxis and apoptosis. In response to oxidative stress, initiates proapoptotic and antiapoptotic signaling in ECs via activation of NF-kappa-B and AKT1 and up-regulation of antiapoptotic protein BCL2. Negatively regulates MAP3K5/ASK1 kinase activity, autophosphorylation and oxidative stress-induced apoptosis mediated by MAP3K5/ASK1. Necessary for the assembly of TARDBP in heterogeneous nuclear ribonucleoprotein (hnRNP) complexes and regulates TARDBP binding to RNA UG repeats and TARDBP-dependent expression of HDAC6, ATG7 and VCP which are involved in clearance of protein aggregates. Plays an important role in platelet activation and aggregation. Regulates calcium mobilization and integrin ITGA2B:ITGB3 bidirectional signaling via increased ROS production as well as by facilitating the interaction between integrin and the cell cytoskeleton. Binds heparan sulfate glycosaminoglycans. In Rattus norvegicus (Rat), this protein is Peptidyl-prolyl cis-trans isomerase A (Ppia).